Consider the following 438-residue polypeptide: Phosphatidylcholine-sterol acyltransferase (438 aa).

A signal peptide spans 1-24; the sequence is MGLPGSPWQRVLLLLGLLLPPATP. N44 is a glycosylation site (N-linked (GlcNAc...) asparagine). Cysteines 74 and 98 form a disulfide. A glycan (N-linked (GlcNAc...) asparagine) is linked at N108. The active-site Nucleophile is the S205. N296 is a glycosylation site (N-linked (GlcNAc...) asparagine). C337 and C380 are joined by a disulfide. The active-site Charge relay system is the D369. N-linked (GlcNAc...) asparagine glycosylation is present at N397. H401 acts as the Charge relay system in catalysis. An N-linked (GlcNAc...) asparagine glycan is attached at N408.

It belongs to the AB hydrolase superfamily. Lipase family. Detected in blood plasma. Produced and secreted by astrocytes (at protein level). Abundantly expressed in liver, brain and testis with highest levels in liver. In the brain, found in cerebellum, cerebral cortex, hippocampus and brain stem. Located to neurons and neuroglia.

It localises to the secreted. It catalyses the reaction a sterol + a 1,2-diacyl-sn-glycero-3-phosphocholine = a sterol ester + a 1-acyl-sn-glycero-3-phosphocholine. The enzyme catalyses a 1-O-alkyl-2-acetyl-sn-glycero-3-phosphocholine + H2O = a 1-O-alkyl-sn-glycero-3-phosphocholine + acetate + H(+). It carries out the reaction a 1-hexadecanoyl-2-acyl-sn-glycero-3-phosphocholine + (24S)-hydroxycholesterol = (24S)-24-hydroxycholesterol ester + 1-hexadecanoyl-sn-glycero-3-phosphocholine. The catalysed reaction is (24S)-hydroxycholesterol + 1-hexadecanoyl-2-(9Z,12Z-octadecadienoyl)-sn-glycero-3-phosphocholine = (24S)-hydroxycholesterol 3-linoleoate + 1-hexadecanoyl-sn-glycero-3-phosphocholine. It catalyses the reaction 1-hexadecanoyl-2-(5Z,8Z,11Z,14Z-eicosatetraenoyl)-sn-glycero-3-phosphocholine + cholesterol = cholesteryl (5Z,8Z,11Z,14Z)-eicosatetraenoate + 1-hexadecanoyl-sn-glycero-3-phosphocholine. The enzyme catalyses 1-hexadecanoyl-2-(9Z-octadecenoyl)-sn-glycero-3-phosphocholine + cholesterol = cholesteryl (9Z-octadecenoate) + 1-hexadecanoyl-sn-glycero-3-phosphocholine. It carries out the reaction 1-hexadecanoyl-2-(8Z,11Z,14Z-eicosatrienoyl)-sn-glycero-3-phosphocholine + cholesterol = cholesteryl (8Z,11Z,14Z)-eicosatrienoate + 1-hexadecanoyl-sn-glycero-3-phosphocholine. The catalysed reaction is 1-hexadecanoyl-2-(5Z,8Z,11Z-eicosatrienoyl)-sn-glycero-3-phosphocholine + cholesterol = cholesteryl (5Z,8Z,11Z)-eicosatrienoate + 1-hexadecanoyl-sn-glycero-3-phosphocholine. It catalyses the reaction 1-hexadecanoyl-2-(5Z,8Z,11Z,14Z,17Z-eicosapentaenoyl)-sn-glycero-3-phosphocholine + cholesterol = (5Z,8Z,11Z,14Z,17Z-eicosapentaenoyl)-cholesterol + 1-hexadecanoyl-sn-glycero-3-phosphocholine. The enzyme catalyses 1-hexadecanoyl-2-(9Z,12Z-octadecadienoyl)-sn-glycero-3-phosphocholine + cholesterol = cholesteryl (9Z,12Z)-octadecadienoate + 1-hexadecanoyl-sn-glycero-3-phosphocholine. It carries out the reaction 1-hexadecanoyl-2-(6Z,9Z,12Z-octadecatrienoyl)-sn-glycero-3-phosphocholine + cholesterol = (6Z,9Z,12Z-octadecatrienoyl)-cholesterol + 1-hexadecanoyl-sn-glycero-3-phosphocholine. The catalysed reaction is 1-hexadecanoyl-2-(11Z,14Z,17Z-eicosatrienoyl)-sn-glycero-3-phosphocholine + cholesterol = (11Z,14Z,17Z-eicosatrienoyl)-cholesterol + 1-hexadecanoyl-sn-glycero-3-phosphocholine. It catalyses the reaction 1-hexadecanoyl-2-(9Z,12Z,15Z-octadecatrienoyl)-sn-glycero-3-phosphocholine + cholesterol = (9Z,12Z,15Z-octadecatrienoyl)-cholesterol + 1-hexadecanoyl-sn-glycero-3-phosphocholine. The enzyme catalyses 1-hexadecanoyl-2-(9Z,12Z-octadecadienoyl)-sn-glycero-3-phosphocholine + H2O = (9Z,12Z)-octadecadienoate + 1-hexadecanoyl-sn-glycero-3-phosphocholine + H(+). It carries out the reaction 1-hexadecanoyl-2-(5Z,8Z,11Z,14Z-eicosatetraenoyl)-sn-glycero-3-phosphocholine + H2O = 1-hexadecanoyl-sn-glycero-3-phosphocholine + (5Z,8Z,11Z,14Z)-eicosatetraenoate + H(+). The catalysed reaction is a 1-O-alkyl-2-acetyl-sn-glycero-3-phosphocholine + 1-hexadecanoyl-sn-glycero-3-phosphocholine = 1-hexadecanoyl-2-acetyl-sn-glycero-3-phosphocholine + a 1-O-alkyl-sn-glycero-3-phosphocholine. APOA1 is the most potent activator in plasma. Also activated by APOE, APOC1 and APOA4. In terms of biological role, central enzyme in the extracellular metabolism of plasma lipoproteins. Synthesized mainly in the liver and secreted into plasma where it converts cholesterol and phosphatidylcholines (lecithins) to cholesteryl esters and lysophosphatidylcholines on the surface of high and low density lipoproteins (HDLs and LDLs). The cholesterol ester is then transported back to the liver. Also produced in the brain by primary astrocytes, and esterifies free cholesterol on nascent APOE-containing lipoproteins secreted from glia and influences cerebral spinal fluid (CSF) APOE- and APOA1 levels. Together with APOE and the cholesterol transporter ABCA1, plays a key role in the maturation of glial-derived, nascent lipoproteins. Required for remodeling high-density lipoprotein particles into their spherical forms. Has a preference for plasma 16:0-18:2 or 18:O-18:2 phosphatidylcholines. Catalyzes the hydrolysis of 1-O-alkyl-2-acetyl-sn-glycero-3-phosphocholine (platelet-activating factor or PAF) to 1-O-alkyl-sn-glycero-3-phosphocholine (lyso-PAF). Also catalyzes the transfer of the acetate group from PAF to 1-hexadecanoyl-sn-glycero-3-phosphocholine forming lyso-PAF. Catalyzes the esterification of (24S)-hydroxycholesterol (24(S)OH-C), also known as cerebrosterol to produce 24(S)OH-C monoesters. The polypeptide is Phosphatidylcholine-sterol acyltransferase (Lcat) (Mus musculus (Mouse)).